The chain runs to 185 residues: Somatotropin (185 aa).

The cysteines at positions 52 and 158 are disulfide-linked. Residue Glu-167 coordinates Zn(2+). Cys-175 and Cys-183 are disulfide-bonded.

Belongs to the somatotropin/prolactin family.

The protein resides in the secreted. Its function is as follows. Growth hormone plays an important role in growth control and is involved in the regulation of several anabolic processes. Implicated as an osmoregulatory substance important for seawater adaptation. This chain is Somatotropin (gh), found in Katsuwonus pelamis (Skipjack tuna).